We begin with the raw amino-acid sequence, 158 residues long: Fluoride-specific ion channel FluC 2 (158 aa).

A run of 4 helical transmembrane segments spans residues 25–45 (AWHGQAPVVAVVALGGGIGGT), 63–83 (WTTFWVNVVGCAVIGVFMVVI), 95–115 (PFFGTGVLGGFTTFSTYAVDI), and 126–146 (TALAYLAATLLAALAAVRLAA). Residues Gly103 and Thr106 each contribute to the Na(+) site.

This sequence belongs to the fluoride channel Fluc/FEX (TC 1.A.43) family.

The protein localises to the cell membrane. It carries out the reaction fluoride(in) = fluoride(out). With respect to regulation, na(+) is not transported, but it plays an essential structural role and its presence is essential for fluoride channel function. Functionally, fluoride-specific ion channel. Important for reducing fluoride concentration in the cell, thus reducing its toxicity. The chain is Fluoride-specific ion channel FluC 2 from Streptomyces avermitilis (strain ATCC 31267 / DSM 46492 / JCM 5070 / NBRC 14893 / NCIMB 12804 / NRRL 8165 / MA-4680).